Here is a 135-residue protein sequence, read N- to C-terminus: 30 kDa antigenic glycoprotein (135 aa).

An N-terminal signal peptide occupies residues 1–5 (GNTYS). N-linked (GlcNAc...) asparagine glycosylation is found at Asn22, Asn31, Asn57, and Asn73.

To H.contortus 15 kDa excretory/secretory protein.

It is found in the secreted. In Trichostrongylus colubriformis (Black scour worm), this protein is 30 kDa antigenic glycoprotein.